Reading from the N-terminus, the 238-residue chain is NAD(P)H-hydrate epimerase (238 aa).

Residues 11–217 (AAALDKDLMS…EIHQKYNLQL (207 aa)) form the YjeF N-terminal domain. Residue 61–65 (NNGGD) coordinates (6S)-NADPHX. The K(+) site is built by Asn62 and Asp123. Residues 127-133 (GFSFTGS) and Asp156 contribute to the (6S)-NADPHX site. Ser159 is a binding site for K(+).

The protein belongs to the NnrE/AIBP family. K(+) is required as a cofactor.

It is found in the cytoplasm. The protein resides in the mitochondrion. The enzyme catalyses (6R)-NADHX = (6S)-NADHX. It catalyses the reaction (6R)-NADPHX = (6S)-NADPHX. Catalyzes the epimerization of the S- and R-forms of NAD(P)HX, a damaged form of NAD(P)H that is a result of enzymatic or heat-dependent hydration. This is a prerequisite for the S-specific NAD(P)H-hydrate dehydratase to allow the repair of both epimers of NAD(P)HX. This Sclerotinia sclerotiorum (strain ATCC 18683 / 1980 / Ss-1) (White mold) protein is NAD(P)H-hydrate epimerase.